Reading from the N-terminus, the 89-residue chain is Putative defensin-like protein 89 (89 aa).

The first 25 residues, M1–G25, serve as a signal peptide directing secretion. Intrachain disulfides connect C30–C66, C36–C57, C42–C64, and C46–C65.

This sequence belongs to the DEFL family.

It is found in the secreted. This is Putative defensin-like protein 89 from Arabidopsis thaliana (Mouse-ear cress).